We begin with the raw amino-acid sequence, 74 residues long: Pelophylaxin-2 (74 aa).

An N-terminal signal peptide occupies residues 1-22 (MFTMKKSLLFFFFLGTIALSLC). A propeptide spanning residues 23–42 (EEERGADEEENGAEITDEEV) is cleaved from the precursor. Cys68 and Cys74 are oxidised to a cystine.

As to expression, expressed by the skin glands.

It localises to the secreted. Functionally, antimicrobial peptide. The chain is Pelophylaxin-2 from Pelophylax fukienensis (Fukien gold-striped pond frog).